The sequence spans 271 residues: Zinc finger CCHC domain-containing protein 9 (271 aa).

Residues 1–40 form a disordered region; the sequence is MTRWARVSTTYNKRPLPATSWEDMKKGSFEGTSQNLPKRK. Residue Ser-48 is modified to Phosphoserine. 4 consecutive CCHC-type zinc fingers follow at residues 128-145, 155-172, 184-201, and 211-228; these read MVCF…DCPA, GICY…KCKA, AKCF…SCPD, and GGCK…DCPE.

The protein localises to the nucleus. It localises to the nucleolus. In terms of biological role, may down-regulate transcription mediated by NF-kappa-B and the serum response element. This chain is Zinc finger CCHC domain-containing protein 9 (ZCCHC9), found in Homo sapiens (Human).